The sequence spans 395 residues: Levanbiose-producing levanase (395 aa).

D1 is a catalytic residue. Substrate-binding positions include 59–60, 124–125, E173, and W261; these read WT and RD.

The protein belongs to the glycosyl hydrolase 32 family.

The protein resides in the membrane. The enzyme catalyses Hydrolysis of (2-&gt;6)-beta-D-fructofuranan, to remove successive disaccharide residues as levanbiose, i.e. 6-(beta-D-fructofuranosyl)-D-fructose, from the end of the chain.. Catalyzes the degradation of levan mainly into levanbiose (difructose). Can also hydrolyze inulin. The sequence is that of Levanbiose-producing levanase (levB) from Geobacillus stearothermophilus (Bacillus stearothermophilus).